A 365-amino-acid chain; its full sequence is Chaperone protein DnaJ (365 aa).

In terms of domain architecture, J spans 4–70 (DYYKILGVDR…QKRRMYDQTG (67 aa)). A CR-type zinc finger spans residues 139 to 220 (GTEKRIKYRR…CNGTGTVVVN (82 aa)). 8 residues coordinate Zn(2+): C152, C155, C168, C171, C194, C197, C208, and C211. CXXCXGXG motif repeat units follow at residues 152–159 (CPDCNGTG), 168–175 (CPTCNGTG), 194–201 (CQTCGGRG), and 208–215 (CPRCNGTG).

The protein belongs to the DnaJ family. As to quaternary structure, homodimer. The cofactor is Zn(2+).

It localises to the cytoplasm. Participates actively in the response to hyperosmotic and heat shock by preventing the aggregation of stress-denatured proteins and by disaggregating proteins, also in an autonomous, DnaK-independent fashion. Unfolded proteins bind initially to DnaJ; upon interaction with the DnaJ-bound protein, DnaK hydrolyzes its bound ATP, resulting in the formation of a stable complex. GrpE releases ADP from DnaK; ATP binding to DnaK triggers the release of the substrate protein, thus completing the reaction cycle. Several rounds of ATP-dependent interactions between DnaJ, DnaK and GrpE are required for fully efficient folding. Also involved, together with DnaK and GrpE, in the DNA replication of plasmids through activation of initiation proteins. The chain is Chaperone protein DnaJ from Thermoplasma acidophilum (strain ATCC 25905 / DSM 1728 / JCM 9062 / NBRC 15155 / AMRC-C165).